We begin with the raw amino-acid sequence, 523 residues long: Sensory neuron membrane protein 1 (523 aa).

Over 1–10 (MRLARGIKYA) the chain is Cytoplasmic. A helical membrane pass occupies residues 11–31 (VIGAGVALFGVLFGWVMFPAI). Residues 32–458 (LKSQLKKEMA…NQLFIPKRIV (427 aa)) are Extracellular-facing. 2 N-linked (GlcNAc...) asparagine glycosylation sites follow: N67 and N229. 3 cysteine pairs are disulfide-bonded: C268-C333, C297-C352, and C335-C341. Residue N440 is glycosylated (N-linked (GlcNAc...) asparagine). The helical transmembrane segment at 459-479 (SVIRWWLLSFGMLAALGGVIF) threads the bilayer. The Cytoplasmic portion of the chain corresponds to 480–523 (HFKDDIMRIAIKGDSSVTKVNPEDGEQKDVSVIGQSHEPPKINM). The disordered stretch occupies residues 499–523 (VNPEDGEQKDVSVIGQSHEPPKINM).

Belongs to the CD36 family. In terms of tissue distribution, localizes to both male and female antennae but not the leg, wing, gut, head, or thoracic ganglia. Detected throughout the sensory epithelium, associating with both sex-pheromone sensilla and plant-volatile sensilla. Differentially expressed both among different sensilla and different neurons within a given sensillum. Expression coincides with that of several other olfactory-specific proteins that are involved in odor detection.

The protein localises to the cell membrane. Its function is as follows. Plays an olfactory role that is not restricted to pheromone sensitivity. The sequence is that of Sensory neuron membrane protein 1 from Manduca sexta (Tobacco hawkmoth).